Here is a 178-residue protein sequence, read N- to C-terminus: Nascent polypeptide-associated complex subunit alpha (178 aa).

Positions 16–80 (PKNEKKAREL…AKVDDMNQRI (65 aa)) constitute an NAC-A/B domain. The segment covering 82–100 (EAQAQQAQQEALQKAAADA) has biased composition (low complexity). The tract at residues 82 to 145 (EAQAQQAQQE…DETGLDPKDI (64 aa)) is disordered. The segment covering 101–126 (GKTEDKSPEAITADLEKASLGDKKAE) has biased composition (basic and acidic residues). The segment covering 127–139 (DEEEDEGEIDETG) has biased composition (acidic residues). The UBA domain occupies 140–178 (LDPKDIEIVVEQTQVSRAKAVKALRNHDGDMVNAIMDLS).

The protein belongs to the NAC-alpha family. Part of the nascent polypeptide-associated complex (NAC), consisting of EGD2 and EGD1. NAC associates with ribosomes via EGD1.

Its subcellular location is the cytoplasm. It localises to the nucleus. Its function is as follows. Component of the nascent polypeptide-associated complex (NAC), a dynamic component of the ribosomal exit tunnel, protecting the emerging polypeptides from interaction with other cytoplasmic proteins to ensure appropriate nascent protein targeting. The NAC complex also promotes mitochondrial protein import by enhancing productive ribosome interactions with the outer mitochondrial membrane and blocks the inappropriate interaction of ribosomes translating non-secretory nascent polypeptides with translocation sites in the membrane of the endoplasmic reticulum. EGD2 may also be involved in transcription regulation. In Candida albicans (strain SC5314 / ATCC MYA-2876) (Yeast), this protein is Nascent polypeptide-associated complex subunit alpha (EGD2).